The following is a 91-amino-acid chain: Sec-independent protein translocase protein TatA (91 aa).

Residues 1 to 21 (MGIFDWKHWIVILIVVVLVFG) form a helical membrane-spanning segment. The segment at 42–91 (AMNDDDKPAEQPAPQPQQAQAAPQGSPLNQPHTIDAQAHKVDEPIRKDQV) is disordered. Residues 51-65 (EQPAPQPQQAQAAPQ) are compositionally biased toward low complexity. Basic and acidic residues predominate over residues 78–91 (QAHKVDEPIRKDQV).

The protein belongs to the TatA/E family. In terms of assembly, the Tat system comprises two distinct complexes: a TatABC complex, containing multiple copies of TatA, TatB and TatC subunits, and a separate TatA complex, containing only TatA subunits. Substrates initially bind to the TatABC complex, which probably triggers association of the separate TatA complex to form the active translocon.

It localises to the cell inner membrane. Part of the twin-arginine translocation (Tat) system that transports large folded proteins containing a characteristic twin-arginine motif in their signal peptide across membranes. TatA could form the protein-conducting channel of the Tat system. The protein is Sec-independent protein translocase protein TatA of Pseudomonas savastanoi pv. phaseolicola (strain 1448A / Race 6) (Pseudomonas syringae pv. phaseolicola (strain 1448A / Race 6)).